Consider the following 171-residue polypeptide: Neuronal vesicle trafficking-associated protein 2 (171 aa).

Polar residues predominate over residues 1 to 10 (MVKLNSNPSE). A disordered region spans residues 1–21 (MVKLNSNPSEKGTKPPSVEDG). Residues 1-71 (MVKLNSNPSE…FRVPKIAEFT (71 aa)) are Cytoplasmic-facing. A helical; Signal-anchor for type II membrane protein transmembrane segment spans residues 72–92 (VTILVSLALAFLACIVFLVVY). The Lumenal portion of the chain corresponds to 93 to 171 (KAFTYDHSCP…EPKPPKTQGH (79 aa)).

It belongs to the NSG family.

The protein localises to the membrane. It localises to the golgi apparatus. It is found in the trans-Golgi network membrane. Its subcellular location is the cell projection. The protein resides in the dendrite. The protein localises to the endosome membrane. It localises to the early endosome membrane. It is found in the late endosome membrane. Its subcellular location is the lysosome lumen. The protein resides in the cytoplasmic vesicle membrane. The protein localises to the golgi stack membrane. It localises to the endosome. It is found in the multivesicular body membrane. The chain is Neuronal vesicle trafficking-associated protein 2 from Homo sapiens (Human).